Consider the following 338-residue polypeptide: Methionine synthase (338 aa).

4 residues coordinate Zn(2+): histidine 210, cysteine 212, glutamate 234, and cysteine 294.

Belongs to the archaeal MetE family. Zn(2+) is required as a cofactor.

The protein operates within amino-acid biosynthesis; L-methionine biosynthesis via de novo pathway. Its function is as follows. Catalyzes the transfer of a methyl group to L-homocysteine resulting in methionine formation. The physiological methyl donor is unknown. The polypeptide is Methionine synthase (Pyrococcus furiosus (strain ATCC 43587 / DSM 3638 / JCM 8422 / Vc1)).